We begin with the raw amino-acid sequence, 764 residues long: Mitogen-activated protein kinase kinase kinase 1b (764 aa).

4 disordered regions span residues 1 to 81 (MVEE…IQQQ), 120 to 260 (KSIA…TATR), 325 to 348 (PNLA…SSAM), and 360 to 392 (VPEL…HYGS). A compositionally biased stretch (gly residues) spans 14-30 (GSWGSGEDGGSSHGGKG). 2 stretches are compositionally biased toward low complexity: residues 60–76 (VHST…LSKS) and 125–135 (SQPLSSPSLSQ). Residues 136–145 (EHGEASHSND) are compositionally biased toward basic and acidic residues. Polar residues predominate over residues 184-201 (YVNSQPQNHYGRKNSPSQ). The region spanning 431–684 (WFKGDFIGSG…CDMLLTHPFI (254 aa)) is the Protein kinase domain. Residues 437-445 (IGSGTFGSV) and Lys-459 contribute to the ATP site. Asp-554 acts as the Proton acceptor in catalysis. Residues 706–764 (EERSIDVSESPSIATSSQSGSSPSVAGDAVSPASVAVRPRSMRTLRSEFSMSSPESIAS) are disordered. Residues 715 to 729 (SPSIATSSQSGSSPS) are compositionally biased toward low complexity. The span at 752–764 (SEFSMSSPESIAS) shows a compositional bias: polar residues.

Belongs to the protein kinase superfamily. STE Ser/Thr protein kinase family. MAP kinase kinase kinase subfamily.

It is found in the cell membrane. The enzyme catalyses L-seryl-[protein] + ATP = O-phospho-L-seryl-[protein] + ADP + H(+). The catalysed reaction is L-threonyl-[protein] + ATP = O-phospho-L-threonyl-[protein] + ADP + H(+). Functionally, the CERK1, MEKK1a/b, MKK1a/b/c and MPK4a/b proteins are involved in pathogen defense. The pathway induces rapid growth inhibition, cell wall depositions and accumulation of defense-related transcripts. This protein is required for responses to chitin and acts redundantly with MEKK1a. This is Mitogen-activated protein kinase kinase kinase 1b (MEKK1b) from Physcomitrium patens (Spreading-leaved earth moss).